Reading from the N-terminus, the 418-residue chain is Putative ion-transport protein YfeO (418 aa).

11 consecutive transmembrane segments (helical) span residues 9 to 31 (MLLL…IMVM), 55 to 77 (SPLW…IRFS), 90 to 112 (LIGA…LGLA), 122 to 140 (PIIT…RLLP), 147 to 169 (WTIL…AALI), 189 to 211 (PLMA…FSLP), 223 to 244 (ILSG…VWCL), 259 to 281 (FVLG…VSLF), 301 to 323 (YFLL…FRGG), 343 to 363 (VPAV…VLVV), and 376 to 398 (VVVP…WLLL).

The protein belongs to the chloride channel (TC 2.A.49) family.

The protein resides in the cell membrane. In Escherichia coli O6:H1 (strain CFT073 / ATCC 700928 / UPEC), this protein is Putative ion-transport protein YfeO (yfeO).